We begin with the raw amino-acid sequence, 490 residues long: Cytochrome P450 71A22 (490 aa).

Residues 2 to 22 traverse the membrane as a helical segment; that stretch reads ESMIRIILLSLIIFITILFFI. Cysteine 432 lines the heme pocket.

It belongs to the cytochrome P450 family. It depends on heme as a cofactor.

Its subcellular location is the membrane. In Arabidopsis thaliana (Mouse-ear cress), this protein is Cytochrome P450 71A22 (CYP71A22).